The sequence spans 326 residues: uncharacterized protein (326 aa).

ATP is bound at residue 127–134 (GATGSGKS).

This sequence belongs to the GSP E family.

This is an uncharacterized protein from Escherichia coli (strain K12).